A 3097-amino-acid polypeptide reads, in one-letter code: Neural-cadherin (3097 aa).

Residues 1–36 form the signal peptide; the sequence is MAARRCLNQLRQRYITNRFNICTCAIFLISLPFILA. N-linked (GlcNAc...) asparagine glycans are attached at residues Asn-97 and Asn-150. The Cadherin 1 domain maps to 181–305; that stretch reads VRENQPAGTR…LDENDNRPIF (125 aa). N-linked (GlcNAc...) asparagine glycans are attached at residues Asn-325 and Asn-426. 15 Cadherin domains span residues 430–543, 554–651, 660–756, 766–858, 867–968, 978–1078, 1087–1183, 1193–1299, 1307–1414, 1423–1514, 1523–1630, 1639–1742, 1749–1861, 1870–1966, and 1974–2085; these read HREK…PPYF, VQLN…APQF, IPEN…APKF, VDED…EPKF, VDEN…KPVF, VEEG…PPLF, VKQD…PPVW, VKEN…IPLF, VLEG…PPYF, VDEN…PPVF, ITEE…APIF, VTEN…PPQF, TEVD…KPHF, VFED…APKF, and LPEH…QPGS. N-linked (GlcNAc...) asparagine glycosylation is present at Asn-930. Asn-1266 carries N-linked (GlcNAc...) asparagine glycosylation. Disulfide bonds link Cys-2346/Cys-2357, Cys-2351/Cys-2366, Cys-2368/Cys-2377, Cys-2559/Cys-2585, Cys-2592/Cys-2607, Cys-2601/Cys-2616, Cys-2618/Cys-2627, Cys-2787/Cys-2822, Cys-2869/Cys-2880, Cys-2874/Cys-2891, and Cys-2893/Cys-2902. In terms of domain architecture, EGF-like 1 spans 2346–2377; the sequence is CRTTPCHNGGRCVDTRFGPHCSCPVGYTGPRC. Residues 2379–2585 form the Laminin G-like 1 domain; sequence QTTRSFRGNG…GLSRNSVAGC (207 aa). The region spanning 2592–2627 is the EGF-like 2 domain; that stretch reads CAQTETTARCWEHGNCVGSLSEARCHCRPGWTGPAC. The 192-residue stretch at 2631-2822 folds into the Laminin G-like 2 domain; sequence TIPTTFKAQS…TMARNLEKGC (192 aa). Residues 2869 to 2902 enclose the EGF-like 3 domain; it reads CLDMPCMNGATCINLEPRLRYRCICPDGFWGENC. A helical membrane pass occupies residues 2917–2937; the sequence is ALAAILVCLLIILILVLVFVV. Residues 2938 to 3097 lie on the Cytoplasmic side of the membrane; that stretch reads YNRRREAHIK…PNPHNTELEL (160 aa).

In terms of tissue distribution, in the embryo, the protein first appears in the mesoderm at stage 9 and is present in the myoblasts and muscle fibers by stage 12 and stage 14, respectively. At stage 12 the protein is also located in the axons of the entire CNS, but not in the glial cells. In third instar larvae protein is expressed in the CNS neuropile, photoreceptor axons and precursors of adult muscles.

The protein resides in the cell membrane. In terms of biological role, cadherins are calcium-dependent cell adhesion proteins. They preferentially interact with themselves in a homophilic manner in connecting cells; cadherins may thus contribute to the sorting of heterogeneous cell types. May associate with arm neural isoform and participate in the transmission of developmental information. The protein is Neural-cadherin (CadN) of Drosophila melanogaster (Fruit fly).